The following is a 261-amino-acid chain: Transmembrane protein 106A (261 aa).

Residues 1 to 23 (MGKAVSQLTSRKDEDKPILPDNP) are disordered. Residues 93–113 (LFVFLSVAICLLIFSLTIFFL) traverse the membrane as a helical segment.

This sequence belongs to the TMEM106 family. In terms of tissue distribution, expressed in liver, spleen, lung, kidney, lymph nodes and adipose tissue (at protein level). Expressed by macrophages.

It localises to the cell membrane. Activates macrophages and polarizes them into M1-like macrophages through the activation of the MAPK and NF-kappaB signaling pathway. Upon activation, up-regulates the expression of CD80, CD86, CD69 and MHC II on macrophages, and induces the release of pro-inflammatory cytokines such as TNF, IL1B, IL6, CCL2 and nitric oxide. May play a role in inhibition of proliferation and migration. This is Transmembrane protein 106A (Tmem106a) from Mus musculus (Mouse).